The sequence spans 472 residues: Cysteine--tRNA ligase (472 aa).

Cysteine 29 serves as a coordination point for Zn(2+). Residues 31–41 (ITVYDYCHLGH) carry the 'HIGH' region motif. The Zn(2+) site is built by cysteine 214, histidine 239, and glutamate 243. A 'KMSKS' region motif is present at residues 271–275 (KMSKS). ATP is bound at residue lysine 274.

This sequence belongs to the class-I aminoacyl-tRNA synthetase family. As to quaternary structure, monomer. The cofactor is Zn(2+).

It is found in the cytoplasm. It carries out the reaction tRNA(Cys) + L-cysteine + ATP = L-cysteinyl-tRNA(Cys) + AMP + diphosphate. The sequence is that of Cysteine--tRNA ligase from Picosynechococcus sp. (strain ATCC 27264 / PCC 7002 / PR-6) (Agmenellum quadruplicatum).